Here is a 442-residue protein sequence, read N- to C-terminus: Lipoyl synthase, apicoplast (442 aa).

The N-terminal stretch at 1–25 is a signal peptide; sequence MHVLTPSLYIYAFFIVCVRLKCGRS. Residues 92–154 are disordered; it reads LLRSESATDE…EKKPDWFHVP (63 aa). Positions 109 to 127 are enriched in basic and acidic residues; it reads LKEKLKESPANWGKDKQEE. [4Fe-4S] cluster is bound by residues Cys177, Cys182, Cys188, Cys203, Cys207, Cys210, and Ser418. The region spanning 189-407 is the Radical SAM core domain; that stretch reads WNIGTATIML…KEEGMKMGFK (219 aa).

Belongs to the radical SAM superfamily. Lipoyl synthase family. [4Fe-4S] cluster is required as a cofactor.

The protein resides in the plastid. It localises to the apicoplast. The enzyme catalyses [[Fe-S] cluster scaffold protein carrying a second [4Fe-4S](2+) cluster] + N(6)-octanoyl-L-lysyl-[protein] + 2 oxidized [2Fe-2S]-[ferredoxin] + 2 S-adenosyl-L-methionine + 4 H(+) = [[Fe-S] cluster scaffold protein] + N(6)-[(R)-dihydrolipoyl]-L-lysyl-[protein] + 4 Fe(3+) + 2 hydrogen sulfide + 2 5'-deoxyadenosine + 2 L-methionine + 2 reduced [2Fe-2S]-[ferredoxin]. The protein operates within protein modification; protein lipoylation via endogenous pathway; protein N(6)-(lipoyl)lysine from octanoyl-[acyl-carrier-protein]: step 2/2. Functionally, catalyzes the radical-mediated insertion of two sulfur atoms into the C-6 and C-8 positions of the octanoyl moiety bound to the lipoyl domains of lipoate-dependent enzymes, thereby converting the octanoylated domains into lipoylated derivatives. This is Lipoyl synthase, apicoplast from Plasmodium vivax (strain Salvador I).